The chain runs to 603 residues: Aspartate--tRNA(Asp/Asn) ligase (603 aa).

The aspartate stretch occupies residues Gln205 to Lys208. Arg227 is an L-aspartate binding site. ATP contacts are provided by residues Arg227–Glu229 and Gln236. An L-aspartate-binding site is contributed by His463. Glu497 is an ATP binding site. Arg504 contacts L-aspartate. Gly549 to Arg552 provides a ligand contact to ATP.

Belongs to the class-II aminoacyl-tRNA synthetase family. Type 1 subfamily. Homodimer.

The protein resides in the cytoplasm. It carries out the reaction tRNA(Asx) + L-aspartate + ATP = L-aspartyl-tRNA(Asx) + AMP + diphosphate. Its function is as follows. Aspartyl-tRNA synthetase with relaxed tRNA specificity since it is able to aspartylate not only its cognate tRNA(Asp) but also tRNA(Asn). Reaction proceeds in two steps: L-aspartate is first activated by ATP to form Asp-AMP and then transferred to the acceptor end of tRNA(Asp/Asn). The sequence is that of Aspartate--tRNA(Asp/Asn) ligase from Anaeromyxobacter sp. (strain K).